The chain runs to 436 residues: MQVSVESTSALERRMTVGVPVERIETEVNKRLQQTARRAKVPGFRPGKVPMSVIRQRYEDAARQEALGDLIQATFYEAVVEQKLNPAGAPAVEPKSFEKGKDLEYVATFEVFPEFEVTGFDSIAIERLQADVADSDVDNMLDILRKQNTRFEAVERAAENGDQLNIDFVGKIDGEAFAGGSAKGTQLVLGSGRMIPGFEDALVGVKAGEERVINPTFPEDYQNLDLAGKTAEFAVTVNSVSAPQLPELNDEFFALFGIKEGGLEGFRAEVRKNMERELRQAIKSKVKNQVMDGLLAANPVEVPKALIGNEVNRLRVQAVQQFGGNIKPDQLPAELFEEQAKRRVVLGLIVAEVVKQFDLKPDEARVRELIEEMASAYQEPEQVVAWYYKNDQQMNEVRSVVLEEQVVDTVLQKANVTDKAVSYEDAVKPAEAPKAD.

A PPIase FKBP-type domain is found at 161–246 (GDQLNIDFVG…VNSVSAPQLP (86 aa)).

It belongs to the FKBP-type PPIase family. Tig subfamily.

The protein resides in the cytoplasm. It catalyses the reaction [protein]-peptidylproline (omega=180) = [protein]-peptidylproline (omega=0). Functionally, involved in protein export. Acts as a chaperone by maintaining the newly synthesized protein in an open conformation. Functions as a peptidyl-prolyl cis-trans isomerase. The protein is Trigger factor of Ectopseudomonas mendocina (strain ymp) (Pseudomonas mendocina).